The chain runs to 442 residues: UDP-N-acetylmuramate--L-alanine ligase (442 aa).

Glycine 109–serine 115 contributes to the ATP binding site.

It belongs to the MurCDEF family.

The protein localises to the cytoplasm. It carries out the reaction UDP-N-acetyl-alpha-D-muramate + L-alanine + ATP = UDP-N-acetyl-alpha-D-muramoyl-L-alanine + ADP + phosphate + H(+). It functions in the pathway cell wall biogenesis; peptidoglycan biosynthesis. Functionally, cell wall formation. The polypeptide is UDP-N-acetylmuramate--L-alanine ligase (Streptococcus pyogenes serotype M2 (strain MGAS10270)).